We begin with the raw amino-acid sequence, 470 residues long: Light-independent protochlorophyllide reductase subunit N (470 aa).

[4Fe-4S] cluster is bound by residues Cys22, Cys47, and Cys107.

It belongs to the BchN/ChlN family. Protochlorophyllide reductase is composed of three subunits; ChlL, ChlN and ChlB. Forms a heterotetramer of two ChlB and two ChlN subunits. Requires [4Fe-4S] cluster as cofactor.

The protein localises to the plastid. It localises to the chloroplast. It catalyses the reaction chlorophyllide a + oxidized 2[4Fe-4S]-[ferredoxin] + 2 ADP + 2 phosphate = protochlorophyllide a + reduced 2[4Fe-4S]-[ferredoxin] + 2 ATP + 2 H2O. It functions in the pathway porphyrin-containing compound metabolism; chlorophyll biosynthesis (light-independent). Its function is as follows. Component of the dark-operative protochlorophyllide reductase (DPOR) that uses Mg-ATP and reduced ferredoxin to reduce ring D of protochlorophyllide (Pchlide) to form chlorophyllide a (Chlide). This reaction is light-independent. The NB-protein (ChlN-ChlB) is the catalytic component of the complex. The sequence is that of Light-independent protochlorophyllide reductase subunit N from Pinus koraiensis (Korean pine).